A 327-amino-acid chain; its full sequence is Protein MRG2 (327 aa).

The tract at residues 1–40 (MGSPNAAAETDLTTDDFIGDTRRDSGSDTETNTDCDGEDL) is disordered. The Tudor-knot domain occupies 52–101 (FEEGERVLAKHSDCFYEAKVLKVEFKDNEWKYFVHYIGWNKSWDEWIRLD). Residues 133–156 (SKMKPRSPNVARGRKRKQDSVDTE) form a disordered region. Residues 162-327 (SDNLLSFNIP…AVEEMEKKEG (166 aa)) enclose the MRG domain.

Interacts with HAM1 and HAM2. Interacts (via MRG domain) with CO. Component of the NuA4 histone acetyltransferase complex. In terms of tissue distribution, ubiquitous. Mainly expressed in the vasculature of cotyledons and leaves, and in roots and inflorescences.

It localises to the nucleus. Chromatin remodeling factor. Acts as a 'reader' protein by binding to H3K4me3 and H3K36me3 to control histone H4 acetylation. Increases the transcriptional levels of the flowering time genes FLC and FT. Binds the chromatin at the FT promoter upon interaction with CO. This chain is Protein MRG2, found in Arabidopsis thaliana (Mouse-ear cress).